We begin with the raw amino-acid sequence, 353 residues long: uncharacterized protein (353 aa).

The chain crosses the membrane as a helical span at residues 267–287; that stretch reads GLPLVVIEAMAFGLPIVAFNC.

It belongs to the glycosyltransferase group 1 family. Glycosyltransferase 4 subfamily.

It localises to the membrane. This is an uncharacterized protein from Haemophilus influenzae (strain ATCC 51907 / DSM 11121 / KW20 / Rd).